Consider the following 525-residue polypeptide: GMP synthase [glutamine-hydrolyzing] (525 aa).

The Glutamine amidotransferase type-1 domain maps to 9 to 207 (RILILDFGSQ…VRDICQCEAL (199 aa)). C86 serves as the catalytic Nucleophile. Catalysis depends on residues H181 and E183. In terms of domain architecture, GMPS ATP-PPase spans 208–400 (WTPAKIIDDA…LGLPYDMLYR (193 aa)). 235–241 (SGGVDSS) is an ATP binding site.

Homodimer.

The catalysed reaction is XMP + L-glutamine + ATP + H2O = GMP + L-glutamate + AMP + diphosphate + 2 H(+). It participates in purine metabolism; GMP biosynthesis; GMP from XMP (L-Gln route): step 1/1. Catalyzes the synthesis of GMP from XMP. The sequence is that of GMP synthase [glutamine-hydrolyzing] from Escherichia fergusonii (strain ATCC 35469 / DSM 13698 / CCUG 18766 / IAM 14443 / JCM 21226 / LMG 7866 / NBRC 102419 / NCTC 12128 / CDC 0568-73).